A 308-amino-acid chain; its full sequence is Glycine betaine uptake system ATP-binding protein YehX (308 aa).

One can recognise an ABC transporter domain in the interval 2–235 (IEFSHVSKLF…PANDFVRQFF (234 aa)). 34-41 (GTSGSGKS) provides a ligand contact to ATP.

It belongs to the ABC transporter superfamily. In terms of assembly, the complex is composed of two ATP-binding proteins (YehX), two transmembrane proteins (YehW and YehY) and a solute-binding protein (YehZ).

The enzyme catalyses glycine betaine(out) + ATP + H2O = glycine betaine(in) + ADP + phosphate + H(+). In terms of biological role, part of an ABC transporter complex involved in low-affinity glycine betaine uptake. Probably responsible for energy coupling to the transport system. The polypeptide is Glycine betaine uptake system ATP-binding protein YehX (yehX) (Escherichia coli (strain K12)).